The sequence spans 319 residues: Olfactory receptor 51F1 (319 aa).

Over Met-1–Ser-37 the chain is Extracellular. Residues Ile-38–Ile-58 form a helical membrane-spanning segment. Residues Ile-59–Leu-75 are Cytoplasmic-facing. The helical transmembrane segment at Ser-76 to Phe-96 threads the bilayer. At Glu-97–Cys-106 the chain is on the extracellular side. The cysteines at positions 106 and 188 are disulfide-linked. Residues Ile-107 to Thr-127 form a helical membrane-spanning segment. The Cytoplasmic portion of the chain corresponds to Ala-128 to Arg-149. Residues Ile-150–Leu-170 form a helical membrane-spanning segment. Residues Leu-171 to Asp-211 lie on the Extracellular side of the membrane. Residues Leu-212–His-232 traverse the membrane as a helical segment. Residues Ser-233 to Thr-249 are Cytoplasmic-facing. Residues Cys-250–Val-270 form a helical membrane-spanning segment. Residues Tyr-271–Arg-279 lie on the Extracellular side of the membrane. A helical transmembrane segment spans residues Val-280 to Ile-300. Residues Asp-301 to Lys-319 are Cytoplasmic-facing.

Belongs to the G-protein coupled receptor 1 family.

It is found in the cell membrane. Its function is as follows. Odorant receptor. The protein is Olfactory receptor 51F1 (OR51F1) of Homo sapiens (Human).